The primary structure comprises 175 residues: Cytochrome c-type biogenesis protein CcmE (175 aa).

Over 1 to 8 (MNAVRRKK) the chain is Cytoplasmic. The helical; Signal-anchor for type II membrane protein transmembrane segment at 9 to 29 (LIWVAATLAGAIIAVLLVIYA) threads the bilayer. At 30-175 (IGQQTDYYFD…GNHTTSTLQE (146 aa)) the chain is on the periplasmic side. Residues His124 and Tyr128 each coordinate heme. Residues 142 to 175 (AAKGVTPTSEQFSPAIPVKQTAGEGNHTTSTLQE) are disordered.

This sequence belongs to the CcmE/CycJ family.

The protein localises to the cell inner membrane. Heme chaperone required for the biogenesis of c-type cytochromes. Transiently binds heme delivered by CcmC and transfers the heme to apo-cytochromes in a process facilitated by CcmF and CcmH. This chain is Cytochrome c-type biogenesis protein CcmE, found in Psychrobacter sp. (strain PRwf-1).